Reading from the N-terminus, the 882-residue chain is Kelch repeat-containing protein 2 (882 aa).

The interval 41 to 60 (TPTLPPNQHRGISGASTALP) is disordered. 6 Kelch repeats span residues 99-143 (RIFV…PPRV), 153-207 (AYVV…IIAS), 213-267 (KLYL…AYDN), 268-317 (KLWV…VYKH), 319-369 (MCVL…LMKN), and 371-417 (KLLI…LCPG). Thr455 carries the post-translational modification Phosphothreonine. Basic and acidic residues predominate over residues 480 to 496 (LDDKAFERKSDREEKKP). Positions 480–516 (LDDKAFERKSDREEKKPQSSKVDSSINKESPGTGIKV) are disordered. A compositionally biased stretch (polar residues) spans 498–509 (SSKVDSSINKES). The residue at position 509 (Ser509) is a Phosphoserine. Coiled-coil stretches lie at residues 550–685 (KNLF…QKIT) and 728–881 (NKIE…LEQK).

In terms of assembly, interacts with KEL1.

This is Kelch repeat-containing protein 2 (KEL2) from Saccharomyces cerevisiae (strain ATCC 204508 / S288c) (Baker's yeast).